Here is a 424-residue protein sequence, read N- to C-terminus: Protein TUNICAMYCIN INDUCED 1 (424 aa).

The signal sequence occupies residues 1–25; that stretch reads MGHRVLVYVGALFLILFTIFPSSSA. N-linked (GlcNAc...) asparagine glycosylation is found at asparagine 197, asparagine 296, and asparagine 406.

Restricted to pollen grains at high levels.

The protein localises to the endoplasmic reticulum. In terms of biological role, involved in the regulation of pollen surface morphology, probably by modulating the secretion of proteins and/or lipids during pollen development. The sequence is that of Protein TUNICAMYCIN INDUCED 1 from Arabidopsis thaliana (Mouse-ear cress).